We begin with the raw amino-acid sequence, 446 residues long: Phosphoglucosamine mutase (446 aa).

Serine 100 (phosphoserine intermediate) is an active-site residue. The Mg(2+) site is built by serine 100, aspartate 241, aspartate 243, and aspartate 245. Serine 100 carries the post-translational modification Phosphoserine.

Belongs to the phosphohexose mutase family. Mg(2+) serves as cofactor. Activated by phosphorylation.

It carries out the reaction alpha-D-glucosamine 1-phosphate = D-glucosamine 6-phosphate. Catalyzes the conversion of glucosamine-6-phosphate to glucosamine-1-phosphate. This Methylorubrum extorquens (strain CM4 / NCIMB 13688) (Methylobacterium extorquens) protein is Phosphoglucosamine mutase.